The chain runs to 337 residues: Anthranilate phosphoribosyltransferase (337 aa).

5-phospho-alpha-D-ribose 1-diphosphate contacts are provided by residues glycine 80, 83 to 84 (GD), threonine 88, 90 to 93 (NIST), 108 to 116 (KHGNRAVSS), and serine 120. An anthranilate-binding site is contributed by glycine 80. Residue serine 92 coordinates Mg(2+). Asparagine 111 contacts anthranilate. Residue arginine 166 participates in anthranilate binding. Aspartate 224 and glutamate 225 together coordinate Mg(2+).

The protein belongs to the anthranilate phosphoribosyltransferase family. As to quaternary structure, homodimer. It depends on Mg(2+) as a cofactor.

It catalyses the reaction N-(5-phospho-beta-D-ribosyl)anthranilate + diphosphate = 5-phospho-alpha-D-ribose 1-diphosphate + anthranilate. Its pathway is amino-acid biosynthesis; L-tryptophan biosynthesis; L-tryptophan from chorismate: step 2/5. In terms of biological role, catalyzes the transfer of the phosphoribosyl group of 5-phosphorylribose-1-pyrophosphate (PRPP) to anthranilate to yield N-(5'-phosphoribosyl)-anthranilate (PRA). The sequence is that of Anthranilate phosphoribosyltransferase from Anaeromyxobacter sp. (strain K).